Reading from the N-terminus, the 302-residue chain is Recombination-associated protein RdgC (302 aa).

Belongs to the RdgC family.

Its subcellular location is the cytoplasm. It is found in the nucleoid. Functionally, may be involved in recombination. The chain is Recombination-associated protein RdgC from Actinobacillus pleuropneumoniae serotype 3 (strain JL03).